A 352-amino-acid chain; its full sequence is N-acetyl-gamma-glutamyl-phosphate reductase 1 (352 aa).

Belongs to the NAGSA dehydrogenase family. Type 1 subfamily.

The protein resides in the cytoplasm. The enzyme catalyses N-acetyl-L-glutamate 5-semialdehyde + phosphate + NADP(+) = N-acetyl-L-glutamyl 5-phosphate + NADPH + H(+). The protein operates within amino-acid biosynthesis; L-arginine biosynthesis; N(2)-acetyl-L-ornithine from L-glutamate: step 3/4. Catalyzes the NADPH-dependent reduction of N-acetyl-5-glutamyl phosphate to yield N-acetyl-L-glutamate 5-semialdehyde. The sequence is that of N-acetyl-gamma-glutamyl-phosphate reductase 1 from Nostoc sp. (strain PCC 7120 / SAG 25.82 / UTEX 2576).